The following is a 260-amino-acid chain: tRNA pseudouridine synthase A (260 aa).

D52 functions as the Nucleophile in the catalytic mechanism. Y110 contacts substrate.

Belongs to the tRNA pseudouridine synthase TruA family. Homodimer.

The enzyme catalyses uridine(38/39/40) in tRNA = pseudouridine(38/39/40) in tRNA. Its function is as follows. Formation of pseudouridine at positions 38, 39 and 40 in the anticodon stem and loop of transfer RNAs. This chain is tRNA pseudouridine synthase A, found in Thiobacillus denitrificans (strain ATCC 25259 / T1).